The chain runs to 333 residues: Neuropeptides B/W receptor type 2 (333 aa).

At 1–45 (MQAAGHPEPLDSRGSFSLPTMGANVSQDNGTGHNATFSEPLPFLY) the chain is on the extracellular side. Asparagine 24, asparagine 29, and asparagine 34 each carry an N-linked (GlcNAc...) asparagine glycan. The helical transmembrane segment at 46 to 69 (VLLPAVYSGICAVGLTGNTAVILV) threads the bilayer. Over 70-80 (ILRAPKMKTVT) the chain is Cytoplasmic. Residues 81–105 (NVFILNLAVADGLFTLVLPVNIAEH) traverse the membrane as a helical segment. Residues 106-120 (LLQYWPFGELLCKLV) are Extracellular-facing. Cysteines 117 and 197 form a disulfide. The helical transmembrane segment at 121–140 (LAVDHYNIFSSIYFLAVMSV) threads the bilayer. The Cytoplasmic segment spans residues 141-165 (DRYLVVLATVRSRHMPWRTYRGAKV). Residues 166-185 (ASLCVWLGVTVLVLPFFSFA) traverse the membrane as a helical segment. At 186 to 211 (GVYSNELQVPSCGLSFPWPEQVWFKA) the chain is on the extracellular side. A helical transmembrane segment spans residues 212-233 (SRVYTLVLGFVLPVCTICVLYT). The Cytoplasmic portion of the chain corresponds to 234-257 (DLLRRLRAVRLRSGAKALGKARRK). Residues 258 to 282 (VTVLVLVVLAVCLLCWTPFHLASVV) form a helical membrane-spanning segment. At 283–292 (ALTTDLPQTP) the chain is on the extracellular side. A helical membrane pass occupies residues 293–307 (LVISMSYVITSLSYA). Residues 308–333 (NSCLNPFLYAFLDDNFRKNFRSILRC) lie on the Cytoplasmic side of the membrane.

It belongs to the G-protein coupled receptor 1 family. As to expression, detected at high levels in caudate nucleus, hippocampus and amygdala; at moderate levels in the adult brain, thalamus, parietal cortex, pituitary gland, adrenal gland and lymph nodes.

It is found in the cell membrane. Its function is as follows. Interacts specifically with a number of opioid ligands. Receptor for neuropeptides B and W, which may be involved in neuroendocrine system regulation, food intake and the organization of other signals. The sequence is that of Neuropeptides B/W receptor type 2 (NPBWR2) from Homo sapiens (Human).